A 159-amino-acid polypeptide reads, in one-letter code: Fatty acid-binding protein homolog 1 (159 aa).

An N-terminal signal peptide occupies residues 1–17; that stretch reads MCAKIALLLVLVGAASA.

The protein belongs to the calycin superfamily. Fatty-acid binding protein (FABP) family. In terms of tissue distribution, first detected in hypodermal precursor cells at the time of gastrulation. From the two-fold stage through to three-fold stages, expression is localized exclusively to hyp-7 but disappears in newly hatched L1s and subsequent developmental stages. Expression from L1 to adult stages is found in a single neuron in the ventral cord with a process into the nerve ring.

It localises to the secreted. In terms of biological role, may play a role in sequestering potentially toxic fatty acids and their peroxidation products, or it may be involved in the maintenance of the impermeable lipid layer of the eggshell. This Caenorhabditis elegans protein is Fatty acid-binding protein homolog 1 (lbp-1).